A 645-amino-acid polypeptide reads, in one-letter code: Threonine--tRNA ligase (645 aa).

Residues 1–63 (MNQINIQFPD…EQDGAIEIIT (63 aa)) form the TGS domain. A catalytic region spans residues 242-540 (DHRKIGKDLE…LTEETKGAFP (299 aa)). Zn(2+) is bound by residues Cys-336, His-387, and His-517.

Belongs to the class-II aminoacyl-tRNA synthetase family. Homodimer. Zn(2+) is required as a cofactor.

The protein localises to the cytoplasm. The catalysed reaction is tRNA(Thr) + L-threonine + ATP = L-threonyl-tRNA(Thr) + AMP + diphosphate + H(+). In terms of biological role, catalyzes the attachment of threonine to tRNA(Thr) in a two-step reaction: L-threonine is first activated by ATP to form Thr-AMP and then transferred to the acceptor end of tRNA(Thr). Also edits incorrectly charged L-seryl-tRNA(Thr). The sequence is that of Threonine--tRNA ligase from Staphylococcus epidermidis (strain ATCC 35984 / DSM 28319 / BCRC 17069 / CCUG 31568 / BM 3577 / RP62A).